Here is a 246-residue protein sequence, read N- to C-terminus: MSGHSKWATIKHKKGALDAKRGKIFTRLIKEITISARAGGDPDGNPRLRTAIAAAKAENMPQDNIKRAIQRGTGELPGAVYEEITFEGYGPGGVAVIVEATTDNRNRAVSEIRHAFSKNGGNLGEPNSVRFMFQKKGLIVVSKDAADEEKLMNIVLEAGGDDLNGEGENWEILTEPQAYDAVVQAVRDAGIEPQVAEVTMIASTYTKLEGATANQMMRLLETLEDHDDVQNVYSNFDMEQVEEVAG.

It belongs to the TACO1 family.

It is found in the cytoplasm. The chain is Probable transcriptional regulatory protein ACP_0521 from Acidobacterium capsulatum (strain ATCC 51196 / DSM 11244 / BCRC 80197 / JCM 7670 / NBRC 15755 / NCIMB 13165 / 161).